The primary structure comprises 406 residues: Succinylornithine transaminase (406 aa).

The residue at position 252 (K252) is an N6-(pyridoxal phosphate)lysine.

This sequence belongs to the class-III pyridoxal-phosphate-dependent aminotransferase family. AstC subfamily. It depends on pyridoxal 5'-phosphate as a cofactor.

The catalysed reaction is N(2)-succinyl-L-ornithine + 2-oxoglutarate = N-succinyl-L-glutamate 5-semialdehyde + L-glutamate. It functions in the pathway amino-acid degradation; L-arginine degradation via AST pathway; L-glutamate and succinate from L-arginine: step 3/5. Functionally, catalyzes the transamination of N(2)-succinylornithine and alpha-ketoglutarate into N(2)-succinylglutamate semialdehyde and glutamate. Can also act as an acetylornithine aminotransferase. The sequence is that of Succinylornithine transaminase from Escherichia coli O17:K52:H18 (strain UMN026 / ExPEC).